Here is a 357-residue protein sequence, read N- to C-terminus: tRNA N6-adenosine threonylcarbamoyltransferase (357 aa).

Fe cation-binding residues include histidine 115 and histidine 119. Substrate-binding positions include leucine 137 to glycine 141, aspartate 170, glycine 183, and asparagine 281. Aspartate 309 provides a ligand contact to Fe cation.

The protein belongs to the KAE1 / TsaD family. Fe(2+) serves as cofactor.

The protein resides in the cytoplasm. The catalysed reaction is L-threonylcarbamoyladenylate + adenosine(37) in tRNA = N(6)-L-threonylcarbamoyladenosine(37) in tRNA + AMP + H(+). In terms of biological role, required for the formation of a threonylcarbamoyl group on adenosine at position 37 (t(6)A37) in tRNAs that read codons beginning with adenine. Is involved in the transfer of the threonylcarbamoyl moiety of threonylcarbamoyl-AMP (TC-AMP) to the N6 group of A37, together with TsaE and TsaB. TsaD likely plays a direct catalytic role in this reaction. The chain is tRNA N6-adenosine threonylcarbamoyltransferase from Nitrobacter hamburgensis (strain DSM 10229 / NCIMB 13809 / X14).